We begin with the raw amino-acid sequence, 346 residues long: MSEAYKNAGVDIEAGYEAVKRMKTHVERTKRAGVMGALGGFGGMFDLSELPYKKPVLVSGTDGVGTKLKLAFLMDKHDTIGVDAVAMCVNDVLAQGAEPLFFLDYLAVGKADPVKIESIVKGVADGCEQSGSALVGGETAEMPGLYTEEEYDIAGFSVGVVEKDEIVTGNSIKEGHLLIGLSSSGIHSNGYSLVRKVLLEDAGLDLHQTYEPFKRPLGEELLEPTKIYVKPVLKQVKAGKVDGMAHVTGGGFIENLPRMLPEGLGVEIDNGSWPVPPIFSFIQEKGQLKAEEMFNVFNMGIGFVLAVKEDDLVDVIRELEQDGEKAFLIGRVQKGEGVTFGGGSLS.

It belongs to the AIR synthase family.

The protein resides in the cytoplasm. It carries out the reaction 2-formamido-N(1)-(5-O-phospho-beta-D-ribosyl)acetamidine + ATP = 5-amino-1-(5-phospho-beta-D-ribosyl)imidazole + ADP + phosphate + H(+). It participates in purine metabolism; IMP biosynthesis via de novo pathway; 5-amino-1-(5-phospho-D-ribosyl)imidazole from N(2)-formyl-N(1)-(5-phospho-D-ribosyl)glycinamide: step 2/2. The protein is Phosphoribosylformylglycinamidine cyclo-ligase of Bacillus pumilus (strain SAFR-032).